Here is a 431-residue protein sequence, read N- to C-terminus: Protein translocase subunit SecY (431 aa).

10 consecutive transmembrane segments (helical) span residues 18 to 38 (IIFT…PVPH), 64 to 84 (LFNF…SIII), 116 to 136 (FTIV…NNMA), 146 to 166 (VGTY…LMWL), 175 to 195 (VGNG…PQTI), 214 to 234 (IIKV…VIFI), 262 to 282 (LPLK…AFIT), 309 to 329 (PVGM…YAFV), 369 to 389 (FVGS…VNIA), and 390 to 410 (GLPS…GVAL).

It belongs to the SecY/SEC61-alpha family. In terms of assembly, component of the Sec protein translocase complex. Heterotrimer consisting of SecY, SecE and SecG subunits. The heterotrimers can form oligomers, although 1 heterotrimer is thought to be able to translocate proteins. Interacts with the ribosome. Interacts with SecDF, and other proteins may be involved. Interacts with SecA.

The protein resides in the cell membrane. The central subunit of the protein translocation channel SecYEG. Consists of two halves formed by TMs 1-5 and 6-10. These two domains form a lateral gate at the front which open onto the bilayer between TMs 2 and 7, and are clamped together by SecE at the back. The channel is closed by both a pore ring composed of hydrophobic SecY resides and a short helix (helix 2A) on the extracellular side of the membrane which forms a plug. The plug probably moves laterally to allow the channel to open. The ring and the pore may move independently. The sequence is that of Protein translocase subunit SecY from Bacillus licheniformis (strain ATCC 14580 / DSM 13 / JCM 2505 / CCUG 7422 / NBRC 12200 / NCIMB 9375 / NCTC 10341 / NRRL NRS-1264 / Gibson 46).